The primary structure comprises 868 residues: Probable inorganic carbon transporter subunit DabA (868 aa).

The Zn(2+) site is built by C392, D394, H574, and C589.

This sequence belongs to the inorganic carbon transporter (TC 9.A.2) DabA family. Forms a complex with DabB. It depends on Zn(2+) as a cofactor.

Its subcellular location is the cell membrane. Functionally, part of an energy-coupled inorganic carbon pump. This chain is Probable inorganic carbon transporter subunit DabA, found in Bacillus cereus (strain G9842).